The primary structure comprises 285 residues: Putative L(+)-tartrate dehydratase subunit alpha (285 aa).

3 residues coordinate iron-sulfur cluster: Cys-60, Cys-182, and Cys-269.

The protein belongs to the class-I fumarase family. As to quaternary structure, tetramer of two alpha and two beta subunits. Iron-sulfur cluster serves as cofactor.

The enzyme catalyses (2R,3R)-tartrate = oxaloacetate + H2O. The sequence is that of Putative L(+)-tartrate dehydratase subunit alpha from Methanocaldococcus jannaschii (strain ATCC 43067 / DSM 2661 / JAL-1 / JCM 10045 / NBRC 100440) (Methanococcus jannaschii).